A 179-amino-acid polypeptide reads, in one-letter code: Large ribosomal subunit protein uL5 (179 aa).

This sequence belongs to the universal ribosomal protein uL5 family. Part of the 50S ribosomal subunit; part of the 5S rRNA/L5/L18/L25 subcomplex. Contacts the 5S rRNA and the P site tRNA. Forms a bridge to the 30S subunit in the 70S ribosome.

This is one of the proteins that bind and probably mediate the attachment of the 5S RNA into the large ribosomal subunit, where it forms part of the central protuberance. In the 70S ribosome it contacts protein S13 of the 30S subunit (bridge B1b), connecting the 2 subunits; this bridge is implicated in subunit movement. Contacts the P site tRNA; the 5S rRNA and some of its associated proteins might help stabilize positioning of ribosome-bound tRNAs. The polypeptide is Large ribosomal subunit protein uL5 (Dichelobacter nodosus (strain VCS1703A)).